Here is a 334-residue protein sequence, read N- to C-terminus: Glyceraldehyde-3-phosphate dehydrogenase 1 (334 aa).

NAD(+) is bound by residues 12–13, Asp-35, and Arg-79; that span reads RI. Residues 152–154, Thr-183, Arg-198, 211–212, and Arg-234 contribute to the D-glyceraldehyde 3-phosphate site; these read SCT and SG. The active-site Nucleophile is the Cys-153. Asn-315 provides a ligand contact to NAD(+).

It belongs to the glyceraldehyde-3-phosphate dehydrogenase family. Homotetramer.

The protein resides in the cytoplasm. It carries out the reaction D-glyceraldehyde 3-phosphate + phosphate + NAD(+) = (2R)-3-phospho-glyceroyl phosphate + NADH + H(+). The protein operates within carbohydrate degradation; glycolysis; pyruvate from D-glyceraldehyde 3-phosphate: step 1/5. Resistant to pentalenolactone. Functionally, catalyzes the oxidative phosphorylation of glyceraldehyde 3-phosphate (G3P) to 1,3-bisphosphoglycerate (BPG) using the cofactor NAD. The first reaction step involves the formation of a hemiacetal intermediate between G3P and a cysteine residue, and this hemiacetal intermediate is then oxidized to a thioester, with concomitant reduction of NAD to NADH. The reduced NADH is then exchanged with the second NAD, and the thioester is attacked by a nucleophilic inorganic phosphate to produce BPG. The chain is Glyceraldehyde-3-phosphate dehydrogenase 1 (gap1) from Streptomyces avermitilis (strain ATCC 31267 / DSM 46492 / JCM 5070 / NBRC 14893 / NCIMB 12804 / NRRL 8165 / MA-4680).